Consider the following 204-residue polypeptide: MELKNTIFLVILLSITILQSSSATPNRSESDQFIVSSCQTTQYPSLCVHTLSAYATKIRHNNDQDLAQTALIISLARAKSVTIFVAKLTKETPKFKRREYLAIKDCIEVLGNSVDRLAQSVKELARAGHAVASEDFMWKMSNVQTWVSAALTDETTCLDGFSERAMGGKVKRLIRYKVVHVAQVTSNALALVNQFAEKRSVKFP.

An N-terminal signal peptide occupies residues 1–23 (MELKNTIFLVILLSITILQSSSA). Asparagine 26 is a glycosylation site (N-linked (GlcNAc...) asparagine). Intrachain disulfides connect cysteine 38–cysteine 47 and cysteine 106–cysteine 157.

It belongs to the PMEI family. Binds reversibly to PME3 to inhibit its activity; the stability of the PME3-PMEI9 complex and the inhibition of the pectin methylesterase (PME) activity is pH-dependent, based on protonation status of amino-acids at the complex interface. In terms of tissue distribution, highly expressed in roots and etiolated hypocotyls. Expressed in seedlings, leaves, stems, siliques, floral buds and mature seeds.

It is found in the secreted. The protein resides in the extracellular space. It localises to the apoplast. Pectin methylesterase (PME) inhibitor that probably targets root-expressed PME and PME3 in a moderate pH-dependent manner, mainly in slightly acidic conditions (pH 6.3 and 5.0) and to some extent at pH 7.5; this processus relies on changes in the protonation of amino acids involved in intermolecular and intramolecular interactions. Regulates de-methylesterification of pectins in roots and affects root growth. This is Pectinesterase inhibitor 9 from Arabidopsis thaliana (Mouse-ear cress).